The primary structure comprises 1807 residues: Integrin beta-4 (1807 aa).

Positions 1 to 27 are cleaved as a signal peptide; the sequence is MAGLCSSPWVKLLLAVVLSAGLPGNMA. Over 28-713 the chain is Extracellular; it reads NRCKKAQVKS…KKKDCLPAPS (686 aa). One can recognise a PSI domain in the interval 29–73; it reads RCKKAQVKSCTECIRVDKSCAYCTDELFKERRCNTQADVLAAGCR. 8 disulfides stabilise this stretch: C30–C48, C38–C456, C41–C61, C51–C72, C245–C288, C458–C477, C469–C480, and C482–C491. In terms of domain architecture, VWFA spans 131–340; that stretch reads DLYILMDFSN…SYYEKLHKYF (210 aa). Residues S139 and S141 each contribute to the Mg(2+) site. Ca(2+) is bound by residues S141, D144, D145, and D176. The involved in NRG1- and IGF1-binding stretch occupies residues 194–199; it reads WPNSDP. Residues N228, D230, P232, and E233 each contribute to the Ca(2+) site. E233 is a Mg(2+) binding site. N327 carries an N-linked (GlcNAc...) asparagine glycan. Residue E350 coordinates Ca(2+). I-EGF domains follow at residues 458–492, 493–538, 539–575, and 576–617; these read CELQKEVQSARCHYRGDFMCGHCVCNEGWSGKTCN, CSTG…HFCE, YDNFQCPRTSGFLCNDRGRCSMGECVCEPGWTGRSCD, and CPLS…TTCE. N492 carries an N-linked (GlcNAc...) asparagine glycan. 11 disulfides stabilise this stretch: C493–C521, C504–C519, C513–C524, C526–C537, C544–C558, C552–C563, C565–C574, C576–C599, C583–C597, C591–C602, and C604–C616. N-linked (GlcNAc...) asparagine glycosylation occurs at N580. Residue N619 is glycosylated (N-linked (GlcNAc...) asparagine). Intrachain disulfides connect C628-C673, C634-C653, C637-C650, and C682-C708. A glycan (N-linked (GlcNAc...) asparagine) is linked at N697. Residues 714-734 traverse the membrane as a helical segment; sequence WWLIPLLIFLLLLLVLLLLLC. The palmitoylated on several cysteines stretch occupies residues 734-751; it reads CWKYCACCKACLGLLPCC. Residues 735–1807 are Cytoplasmic-facing; it reads WKYCACCKAC…THMDQQFFQT (1073 aa). S773, S1071, and S1121 each carry phosphoserine. In terms of domain architecture, Calx-beta spans 981–1086; sequence VNITIIKEQA…QVRRFQVQLS (106 aa). The segment at 1119-1141 is disordered; sequence SASPPLPRGDLGAPQNPNAKAAG. Fibronectin type-III domains lie at 1131–1220 and 1224–1323; these read APQN…THQE and EPGR…TQPK. Residues S1386, S1389, and S1405 each carry the phosphoserine modification. Residue T1418 is modified to Phosphothreonine. S1425 is subject to Phosphoserine. At T1514 the chain carries Phosphothreonine. 2 consecutive Fibronectin type-III domains span residues 1514-1609 and 1627-1723; these read TPTR…VHPQ and APGP…SQDG. S1776 is subject to Phosphoserine.

It belongs to the integrin beta chain family. As to quaternary structure, heterodimer of an alpha and a beta subunit. Beta-4 associates with alpha-6. Interacts (via cytoplasmic region) with COL17A1 (via cytoplasmic region). Interacts (via cytoplasmic region) with DST isoform 3 (via N-terminus). Interacts (via cytoplasmic domain) with DST (via N-terminus). Interacts with RAC1. ITGA6:ITGB4 is found in a ternary complex with NRG1 and ERBB3. ITGA6:ITGB4 is found in a ternary complex with IGF1 and IGF1R. ITGA6:ITGB4 interacts with IGF2. Interacts with TMEM268; this interaction prevents ITGB4 degradation. Palmitoylated by DHHC3 at several cysteines of the membrane-proximal region, enhancing stability and cell surface expression. Palmitoylation also promotes secondary association with tertaspanins.

Its subcellular location is the cell membrane. The protein resides in the cell junction. It is found in the hemidesmosome. In terms of biological role, integrin alpha-6/beta-4 is a receptor for laminin. It plays a critical structural role in the hemidesmosome of epithelial cells. Is required for the regulation of keratinocyte polarity and motility. ITGA6:ITGB4 binds to NRG1 (via EGF domain) and this binding is essential for NRG1-ERBB signaling. ITGA6:ITGB4 binds to IGF1 and this binding is essential for IGF1 signaling. ITGA6:ITGB4 binds to IGF2 and this binding is essential for IGF2 signaling. The chain is Integrin beta-4 (Itgb4) from Rattus norvegicus (Rat).